The chain runs to 148 residues: uncharacterized protein (148 aa).

This is an uncharacterized protein from Schizosaccharomyces pombe (strain 972 / ATCC 24843) (Fission yeast).